The following is a 312-amino-acid chain: Homeobox-leucine zipper protein ATHB-5 (312 aa).

Residues 1-33 (MKRSRGSSDSLSGFLPIRHSTTDKQISPRPTTT) are disordered. The segment covering 23–33 (DKQISPRPTTT) has biased composition (polar residues). Residues 69-128 (AAEKKRRLGVEQVKALEKNFEIDNKLEPERKVKLAQELGLQPRQVAIWFQNRRARWKTKQ) constitute a DNA-binding region (homeobox). Residues 129–164 (LERDYGVLKSNFDALKRNRDSLQRDNDSLLGQIKEL) are leucine-zipper.

The protein belongs to the HD-ZIP homeobox family. Class I subfamily. As to quaternary structure, interacts with DNA as homodimer. As to expression, widely expressed.

The protein resides in the nucleus. Functionally, probable transcription factor that acts as a positive regulator of ABA-responsiveness, mediating the inhibitory effect of ABA on growth during seedling establishment. Binds to the DNA sequence 5'-CAATNATTG-3'. The protein is Homeobox-leucine zipper protein ATHB-5 (ATHB-5) of Arabidopsis thaliana (Mouse-ear cress).